The sequence spans 387 residues: Gamma-butyrobetaine dioxygenase (387 aa).

Cys38, Cys40, Cys43, and His82 together coordinate Zn(2+). Fe cation is bound by residues His202, Asp204, and His347. Residue Ser351 is modified to Phosphoserine.

It belongs to the gamma-BBH/TMLD family. Requires Fe(2+) as cofactor. L-ascorbate serves as cofactor. Highly expressed in kidney; moderately expressed in liver; very low expression in brain.

The protein resides in the cytoplasm. The enzyme catalyses 4-(trimethylamino)butanoate + 2-oxoglutarate + O2 = carnitine + succinate + CO2. Its pathway is amine and polyamine biosynthesis; carnitine biosynthesis. Functionally, catalyzes the formation of L-carnitine from gamma-butyrobetaine. This chain is Gamma-butyrobetaine dioxygenase (BBOX1), found in Homo sapiens (Human).